We begin with the raw amino-acid sequence, 405 residues long: Protein PAG1 (405 aa).

The signal sequence occupies residues 1 to 50 (MVSLIILFRLTFAIANRVRTLMKVLVIVSFFVLTGSASADSGALSLSGAA). N-linked (GlcNAc...) asparagine glycans are attached at residues Asn-55, Asn-104, Asn-256, and Asn-351. A lipid anchor (GPI-anchor amidated alanine) is attached at Ala-391. Residues 392–405 (DSLRRTLALLFLLF) constitute a propeptide, removed in mature form.

It localises to the cell membrane. This is Protein PAG1 (PAG1) from Trypanosoma brucei brucei.